A 574-amino-acid polypeptide reads, in one-letter code: MSSGIILLIVAIVLLVIIAYLVGVIIRKRNDSLITSLEERKQALFALPVNDEIEEVKSLHLIGQSQTSFREWNQKWVDLTVNSFADIENHIFEAENLNDTFNFIRAKHEINSVESQLNLVEEDIASIREALNILKEQEEKNSARVTHALDLYEKLQASISENEDNFGSTMPEIDKQMKNIETEFSQFVALNSSGDPVEASEVLDRAEEHTIALGQITEQIPAIVAKLEDDFPDQLDDLETGYRRLLEENYHFPEKNIEARFQEIRESIRANSSELVTLDLDRAREENTHIQERIDSLYEVFEREIAAYKVAAKNSKMLPRYLEHVKRNNEQLKDEIARLSRKYILSETESLTVKAFEKDIKEIEDSTLAVAEQFGLQEKPFSELQVTFERSIKTLTNVESGQMDVFAAVKDIEKIESQARHNLDVYVTQLHMIKRYMEKRHLPGIPQDFLSAFFTTSSQLEALMDELSRGRINIEAVSRLSEVATVAIANLEDLTYQVVQNATLTEQLLQYSNRYRSFEAGVQSSFEHALRLFEVENDYQASFDEISYALETVEPGVTDRFVNSYEKTREHIRF.

The Extracellular segment spans residues 1–7; sequence MSSGIIL. The helical transmembrane segment at 8 to 26 threads the bilayer; sequence LIVAIVLLVIIAYLVGVII. The Cytoplasmic portion of the chain corresponds to 27–574; the sequence is RKRNDSLITS…YEKTREHIRF (548 aa). Coiled coils occupy residues 102-141, 274-350, and 459-520; these read NFIR…EEKN, ELVT…ETES, and QLEA…SFEA.

It belongs to the EzrA family.

The protein resides in the cell membrane. Functionally, negative regulator of FtsZ ring formation; modulates the frequency and position of FtsZ ring formation. Inhibits FtsZ ring formation at polar sites. Interacts either with FtsZ or with one of its binding partners to promote depolymerization. This Streptococcus pyogenes serotype M1 protein is Septation ring formation regulator EzrA.